We begin with the raw amino-acid sequence, 310 residues long: uncharacterized protein (310 aa).

Disordered stretches follow at residues 1 to 53, 78 to 127, and 153 to 217; these read MSNK…NKEM, PIEN…TITN, and QQPL…SQML. Residues 11–25 show a composition bias toward acidic residues; the sequence is GEEDEEEDDLYDDYD. Composition is skewed to polar residues over residues 37–49 and 78–88; these read STSMNKSDSNISL and PIENINENPSP. Low complexity-rich tracts occupy residues 94-126, 164-184, and 192-208; these read QTQQTQPQQNPISPITPLSSSSPSSSTTTTTIT, PSPIILQHQQQQQPLQSQYIT, and YQPIASQQSQQPQQIPT. A coiled-coil region spans residues 268 to 299; that stretch reads DLIKSVQHNIRQYNDDILTLEEKLEQTEWSLQ.

This is an uncharacterized protein from Dictyostelium discoideum (Social amoeba).